A 256-amino-acid polypeptide reads, in one-letter code: MEEEIYYSVRMRASRDAPHEQGGKHISGGERLITYSGLQEAVNGLLHKGFSHSRGTPDFMQIQLESINQPIKTIRPLPVAVHQTDTAEKGQAVARKLLQKAGIPPHMIEKAYQNIAEYAEVRGAVLFDIQTGKRIDGRKERGVRVSRMDWPAHDFQKWTLEHKMPENPRIKEAHAIAAKVCAHPGIIAELCWSDDPDYITGYVAAKKLGYQRITKMKNAGDESGCRIFFTDGAIDTESCIHFLEKQPVFIQREGKI.

This sequence belongs to the BioW family. In terms of assembly, homodimer. Requires Mg(2+) as cofactor.

The enzyme catalyses heptanedioate + ATP + CoA = 6-carboxyhexanoyl-CoA + AMP + diphosphate. The protein operates within metabolic intermediate metabolism; pimeloyl-CoA biosynthesis; pimeloyl-CoA from pimelate: step 1/1. Catalyzes the transformation of pimelate into pimeloyl-CoA with concomitant hydrolysis of ATP to AMP. The chain is 6-carboxyhexanoate--CoA ligase from Bacillus amyloliquefaciens (strain ATCC 23350 / DSM 7 / BCRC 11601 / CCUG 28519 / NBRC 15535 / NRRL B-14393 / F).